The primary structure comprises 279 residues: MEVERDQHKPPLSLQNNKIPSSQNFPVVDLSNTNGELVARKVAKASEEWGIFQVVNHGIPTELIRRLHKVDTQFFELPESKKEAVAKPANSKEIQGYEMDDVQGRRSHIFHNLYPSSSVNYAFWPKNPPEYREVTEEFAKHAKQLAEEILGLLSEGAGYLMKINYYRPCPEPDWVMGIKAHTDFNGLTLLIPNEIFGLQVFKEDRWLDVDYIYPAVIIIIGDQIMKMSNGRYNNVLHRALMDKKKTRMSSVVHIKPPYDMVVSHFPNSPAAIILPSSSL.

The interval 1–25 (MEVERDQHKPPLSLQNNKIPSSQNF) is disordered. Over residues 13–25 (SLQNNKIPSSQNF) the composition is skewed to polar residues. Residues 156-256 (GAGYLMKINY…RMSSVVHIKP (101 aa)) form the Fe2OG dioxygenase domain. 164-166 (NYY) serves as a coordination point for 2-oxoglutarate. Residues histidine 181, aspartate 183, and histidine 237 each contribute to the Fe cation site. 247–249 (RMS) provides a ligand contact to 2-oxoglutarate.

The protein belongs to the iron/ascorbate-dependent oxidoreductase family. Fe(2+) is required as a cofactor.

It catalyses the reaction a (2R,3R)-dihydroflavonol + 2-oxoglutarate + O2 = a flavonol + succinate + CO2 + H2O. The protein operates within secondary metabolite biosynthesis; flavonoid biosynthesis. In Arabidopsis thaliana (Mouse-ear cress), this protein is Probable flavonol synthase 4 (FLS4).